Consider the following 550-residue polypeptide: Tether containing UBX domain for GLUT4 (550 aa).

Ala2 is subject to N-acetylalanine. The interval 185-320 (AVRSKAPGSP…EPPVDRDPVV (136 aa)) is disordered. Residue Ser193 is modified to Phosphoserine. A compositionally biased stretch (low complexity) spans 193 to 206 (SPVSSLSADQASSS). Basic and acidic residues predominate over residues 217–226 (SRGDLNHEGD). A compositionally biased stretch (polar residues) spans 242-252 (DAQTKQSTSEP). The interaction with GLUT4 stretch occupies residues 313–376 (PVDRDPVVYH…LVTKAFREAQ (64 aa)). A UBX domain is found at 382-458 (ERYPKVALRV…NLFPAALVHF (77 aa)). Ser496 is subject to Phosphoserine. Residues 496–550 (SPPLLPAPDPVSLESEPIAEDGALGPPEPIQGTAQPVKRSLGKVPKWLKLPASKR) form a disordered region.

In terms of assembly, interacts with VCP. Interacts with VCPKMT. Interacts with GLUT4. Ubiquitous.

Its subcellular location is the endomembrane system. The protein localises to the endoplasmic reticulum-Golgi intermediate compartment membrane. It localises to the cytoplasm. It is found in the nucleus. In terms of biological role, enhances VCP methylation catalyzed by VCPKMT. Tethering protein that sequesters GLUT4-containing vesicles in the cytoplasm in the absence of insulin. Modulates the amount of GLUT4 that is available at the cell surface. The polypeptide is Tether containing UBX domain for GLUT4 (Aspscr1) (Mus musculus (Mouse)).